The primary structure comprises 859 residues: Probable potassium transporter 14 (859 aa).

The segment covering 1-19 has biased composition (gly residues); the sequence is METRSGGSGSASGGGGGGR. Positions 1–69 are disordered; that stretch reads METRSGGSGS…SRGGCSDSDD (69 aa). Over 1–112 the chain is Cytoplasmic; that stretch reads METRSGGSGS…RHQEITVGRS (112 aa). Low complexity predominate over residues 54–65; the sequence is PAAASGSRGGCS. Residues 113-133 form a helical membrane-spanning segment; it reads IVLAVQTLGVVFGDVGTSPLY. Topologically, residues 134 to 155 are extracellular; it reads AFDVMFNKYPITSKEDVLGALS. The helical transmembrane segment at 156–176 threads the bilayer; it reads LVIYTLILIPLLKYTLIALWG. Over 177 to 240 the chain is Cytoplasmic; the sequence is NDDGEGGTFA…RLETSSMLKK (64 aa). Residues 241-261 form a helical membrane-spanning segment; that stretch reads LLLMLVLFGTSMVIADGVVTP. Topologically, residues 262 to 275 are extracellular; it reads AMSVMSAVNGLKVG. Residues 276–296 form a helical membrane-spanning segment; that stretch reads ISSVNEGEVVMITVAVLIVLF. Residues 297–305 lie on the Cytoplasmic side of the membrane; it reads TLQRFGSSK. The chain crosses the membrane as a helical span at residues 306–326; that stretch reads VALAVGPALFIWFCCLAGIGI. The Extracellular segment spans residues 327-359; sequence YNMKTYGSAVLQAFNPMYIYYYFERNPTQAWMS. Residues 360-380 traverse the membrane as a helical segment; sequence LGGCLLCATGSEAMFADLCYF. Over 381 to 388 the chain is Cytoplasmic; sequence SVKSVQLT. A helical membrane pass occupies residues 389-409; it reads FVFLVLPCLLLGYLGQAAFLM. The Extracellular segment spans residues 410–417; that stretch reads ENLTENQQ. N-linked (GlcNAc...) asparagine glycosylation occurs at Asn411. The chain crosses the membrane as a helical span at residues 418-438; that stretch reads VFFLSIPNQAFWPVVFIAILA. Topologically, residues 439–478 are cytoplasmic; the sequence is AIIASRTMTTAIFSTIKQATALGCFPRLKIIHTSRSFMGQ. The chain crosses the membrane as a helical span at residues 479–499; sequence IYIPMMNWFLLVSCLAFVTMF. Residues 500–508 are Extracellular-facing; sequence GSINEIGNA. A helical membrane pass occupies residues 509–531; that stretch reads YGIAELGVMMMTTVLVTIIMLLI. Residues 532 to 535 are Cytoplasmic-facing; that stretch reads WQIN. A helical membrane pass occupies residues 536 to 558; it reads IIVVLCFLTLSLGLELIFFSSVL. Residues 559-560 lie on the Extracellular side of the membrane; sequence GS. The helical transmembrane segment at 561 to 581 threads the bilayer; the sequence is VADGSWVLLVFAAVLYLIMYI. Residues 582–859 lie on the Cytoplasmic side of the membrane; it reads WNYGTKLKYE…MMQVAMQYMV (278 aa). The segment at 752–772 is disordered; that stretch reads GVPPAEAAGTTEHPTIGSSMS. Residues 763–772 are compositionally biased toward polar residues; that stretch reads EHPTIGSSMS.

This sequence belongs to the HAK/KUP transporter (TC 2.A.72.3) family.

Its subcellular location is the membrane. Its function is as follows. High-affinity potassium transporter. This Oryza sativa subsp. japonica (Rice) protein is Probable potassium transporter 14 (HAK14).